A 321-amino-acid polypeptide reads, in one-letter code: MRNTFLEFEQPLAELENKIEQLRYVQADSAVDISDEIGRLQQKSQTLAKEIYGKLTPWQTALVARHPQRPYTLDYVREIFTDFHELHGDRMYADDQSIVGGLARFNGQSCMVIGHQKGRDTKERAARNFGMPRPEGYRKAQRLMRLAEKFKLPIFTFVDTPGAYPGIGAEERGQSEAIGHNLYVMAELKVPVIVTIIGEGGSGGALAIAVGNAVLMLQYSTYSVISPEGCASILWRSADKAPEAAEALAITAPRLKDLGLIDRVVNEPIGGAHRDPRVMARLLRRALGDSLRQLQDLTPEQLVEQRLERVLAYGRFQEVRG.

The 255-residue stretch at 39–293 (RLQQKSQTLA…RRALGDSLRQ (255 aa)) folds into the CoA carboxyltransferase C-terminal domain.

Belongs to the AccA family. In terms of assembly, acetyl-CoA carboxylase is a heterohexamer composed of biotin carboxyl carrier protein (AccB), biotin carboxylase (AccC) and two subunits each of ACCase subunit alpha (AccA) and ACCase subunit beta (AccD).

It is found in the cytoplasm. The catalysed reaction is N(6)-carboxybiotinyl-L-lysyl-[protein] + acetyl-CoA = N(6)-biotinyl-L-lysyl-[protein] + malonyl-CoA. It functions in the pathway lipid metabolism; malonyl-CoA biosynthesis; malonyl-CoA from acetyl-CoA: step 1/1. Its function is as follows. Component of the acetyl coenzyme A carboxylase (ACC) complex. First, biotin carboxylase catalyzes the carboxylation of biotin on its carrier protein (BCCP) and then the CO(2) group is transferred by the carboxyltransferase to acetyl-CoA to form malonyl-CoA. The sequence is that of Acetyl-coenzyme A carboxylase carboxyl transferase subunit alpha from Bordetella avium (strain 197N).